Reading from the N-terminus, the 129-residue chain is Glycine cleavage system H protein (129 aa).

The Lipoyl-binding domain occupies 24 to 106 (LLKIGVSEFA…IGEGWLVILK (83 aa)). Lys-65 carries the N6-lipoyllysine modification.

It belongs to the GcvH family. In terms of assembly, the glycine cleavage system is composed of four proteins: P, T, L and H. (R)-lipoate serves as cofactor.

Functionally, the glycine cleavage system catalyzes the degradation of glycine. The H protein shuttles the methylamine group of glycine from the P protein to the T protein. This is Glycine cleavage system H protein from Prochlorococcus marinus (strain AS9601).